A 499-amino-acid chain; its full sequence is Potassium voltage-gated channel subfamily A member 2 (499 aa).

Residues 1-26 form a disordered region; it reads MTVATGDPADEAAALPGHPQDTYDPE. Residues 1-125 are tetramerization domain; the sequence is MTVATGDPAD…YELGEEAMEM (125 aa). At 1–160 the chain is on the cytoplasmic side; the sequence is MTVATGDPAD…LLFEYPESSG (160 aa). The chain crosses the membrane as a helical span at residues 161–182; it reads PARIIAIVSVMVILISIVSFCL. Over 183 to 221 the chain is Extracellular; sequence ETLPIFRDENEDMHGSGVTFHTYSNSTIGYQQSTSFTDP. Asparagine 207 is a glycosylation site (N-linked (GlcNAc...) asparagine). Residues 222 to 243 traverse the membrane as a helical segment; sequence FFIVETLCIIWFSFEFLVRFFA. A lipid anchor (S-palmitoyl cysteine) is attached at cysteine 244. The Cytoplasmic portion of the chain corresponds to 244–254; that stretch reads CPSKAGFFTNI. The helical transmembrane segment at 255–275 threads the bilayer; the sequence is MNIIDIVAIIPYFITLGTELA. Residues 276 to 289 are Extracellular-facing; it reads EKPEDAQQGQQAMS. A helical; Voltage-sensor transmembrane segment spans residues 290–310; it reads LAILRVIRLVRVFRIFKLSRH. Residues 311 to 325 are Cytoplasmic-facing; the sequence is SKGLQILGQTLKASM. The interval 312–325 is S4-S5 linker; that stretch reads KGLQILGQTLKASM. A helical membrane pass occupies residues 326 to 347; it reads RELGLLIFFLFIGVILFSSAVY. Topologically, residues 348-361 are extracellular; that stretch reads FAEADERESQFPSI. Positions 362-373 form an intramembrane region, helical; sequence PDAFWWAVVSMT. Residues 374–379 carry the Selectivity filter motif; the sequence is TVGYGD. The stretch at 374–381 is an intramembrane region; that stretch reads TVGYGDMV. Residues 382 to 388 lie on the Extracellular side of the membrane; it reads PTTIGGK. A helical transmembrane segment spans residues 389-417; sequence IVGSLCAIAGVLTIALPVPVIVSNFNYFY. Over 418–499 the chain is Cytoplasmic; that stretch reads HRETEGEEQA…VNITKMLTDV (82 aa). Tyrosine 429 carries the phosphotyrosine modification. A phosphoserine mark is found at serine 434, serine 440, serine 441, and serine 449. A Phosphotyrosine modification is found at tyrosine 458. Serine 468 is subject to Phosphoserine. Residues 497–499 carry the PDZ-binding motif; sequence TDV.

Belongs to the potassium channel family. A (Shaker) (TC 1.A.1.2) subfamily. Kv1.2/KCNA2 sub-subfamily. In terms of assembly, homotetramer and heterotetramer with other channel-forming alpha subunits, such as KCNA1, KCNA4, KCNA5, KCNA6 and KCNA7. Channel activity is regulated by interaction with the beta subunits, including KCNAB1 and KCNAB2. Identified in a complex with KCNA1 and KCNAB2. Identified in a complex with KCNA5 and KCNAB1. Identified in a complex with KCNA4 and FYN. Interacts with the beta subunit KCNAB1. Interacts with PTK2B. Interacts (via C-terminus) with CTTN. Interacts (via N-terminal cytoplasmic domain) with RHOA (GTP-bound form); this regulates channel activity by reducing location at the cell surface in response to CHRM1 activation. Interacts with DRD2. Interacts with SIGMAR1; cocaine consumption leads to increased interaction. Interacts with ADAM22. Interacts (via C-terminus) with the PDZ domains of DLG1, DLG2 and DLG4. Interacts with CNTNAP2. Interacts with ADAM11. Interacts with LYNX1. Post-translationally, phosphorylated on tyrosine residues; phosphorylation increases in response to ischemia. Phosphorylated on tyrosine residues by activated PTK2B/PYK2. Phosphorylation on tyrosine residues suppresses ion channel activity. Phosphorylated on tyrosine residues in response to CHRM1 activation; this abolishes interaction with CTTN. This is probably due to endocytosis of the phosphorylated channel subunits. Phosphorylated on serine residues in response to increased cAMP levels; phosphorylation is apparently not catalyzed by PKA. In terms of processing, N-glycosylated, with complex, sialylated N-glycans. As to expression, detected in brain cortex. Detected in peroneal nerve in the juxtaparanodal regions of the node of Ranvier; expression is decreased in patients with diabetes mellitus that suffer from axonal neuropathy. Detected in paranodal and juxtanodal zones in myelinated spinal cord (at protein level).

The protein localises to the cell membrane. It is found in the membrane. The protein resides in the cell projection. It localises to the axon. Its subcellular location is the synapse. The protein localises to the endoplasmic reticulum membrane. It is found in the lamellipodium membrane. The protein resides in the synaptosome. It localises to the presynaptic cell membrane. Its subcellular location is the dendrite. The protein localises to the cell junction. It is found in the paranodal septate junction. It carries out the reaction K(+)(in) = K(+)(out). Its activity is regulated as follows. Inhibited by 4-aminopyridine (4-AP) and charybdotoxin (CTX), but not by tetraethylammonium (TEA). Inhibited by dendrotoxin (DTX). Inhibited by tityustoxin-K alpha (TsTX-Kalpha), a toxin that is highly specific for KCNA2. Inhibited by maurotoxin. Inhibited by kappaM conotoxins kappaM-RIIIJ and kappaM-RIIIK; kappaM-RIIIJ has much higher affinity for channels containing KCNA2 than kappaM-RIIIK, with the exception of heterodimers formed by KCNA2 and KCNA7 where the opposite is true. In terms of biological role, voltage-gated potassium channel that mediates transmembrane potassium transport in excitable membranes, primarily in the brain and the central nervous system, but also in the cardiovascular system. Prevents aberrant action potential firing and regulates neuronal output. Forms tetrameric potassium-selective channels through which potassium ions pass in accordance with their electrochemical gradient. The channel alternates between opened and closed conformations in response to the voltage difference across the membrane. Can form functional homotetrameric channels and heterotetrameric channels that contain variable proportions of KCNA1, KCNA2, KCNA4, KCNA5, KCNA6, KCNA7, and possibly other family members as well; channel properties depend on the type of alpha subunits that are part of the channel. Channel properties are modulated by cytoplasmic beta subunits that regulate the subcellular location of the alpha subunits and promote rapid inactivation of delayed rectifier potassium channels. In vivo, membranes probably contain a mixture of heteromeric potassium channel complexes, making it difficult to assign currents observed in intact tissues to any particular potassium channel family member. Homotetrameric KCNA2 forms a delayed-rectifier potassium channel that opens in response to membrane depolarization, followed by slow spontaneous channel closure. In contrast, a heteromultimer formed by KCNA2 and KCNA4 shows rapid inactivation. Regulates neuronal excitability and plays a role as pacemaker in the regulation of neuronal action potentials. KCNA2-containing channels play a presynaptic role and prevent hyperexcitability and aberrant action potential firing. Response to toxins that are selective for KCNA2-containing potassium channels suggests that in Purkinje cells, dendritic subthreshold KCNA2-containing potassium channels prevent random spontaneous calcium spikes, suppressing dendritic hyperexcitability without hindering the generation of somatic action potentials, and thereby play an important role in motor coordination. Plays a role in the induction of long-term potentiation of neuron excitability in the CA3 layer of the hippocampus. May function as down-stream effector for G protein-coupled receptors and inhibit GABAergic inputs to basolateral amygdala neurons. May contribute to the regulation of neurotransmitter release, such as gamma-aminobutyric acid (GABA). Contributes to the regulation of the axonal release of the neurotransmitter dopamine. Reduced KCNA2 expression plays a role in the perception of neuropathic pain after peripheral nerve injury, but not acute pain. Plays a role in the regulation of the time spent in non-rapid eye movement (NREM) sleep. The chain is Potassium voltage-gated channel subfamily A member 2 (KCNA2) from Homo sapiens (Human).